An 862-amino-acid chain; its full sequence is FAS1 domain-containing protein YLR001C (862 aa).

A signal peptide spans 1–23; sequence MNMAIQTIKYIFWLLPILGLTQA. At 24-762 the chain is on the vacuolar side; it reads LLQNPGDDFP…KYHLRLPGIA (739 aa). The FAS1 1 domain occupies 34-162; that stretch reads FSTVIDILSE…ASLQGINNLL (129 aa). N-linked (GlcNAc...) asparagine glycosylation is found at Asn68, Asn112, Asn152, Asn200, Asn291, Asn333, Asn450, Asn521, Asn542, Asn569, Asn663, Asn679, and Asn688. FAS1 domains are found at residues 463–604 and 606–744; these read PGDL…DQLD and PVDL…DKPI. Residues 763-783 form a helical membrane-spanning segment; the sequence is VGFGVIIGVTIAISLLFCIII. The Cytoplasmic portion of the chain corresponds to 784-862; that stretch reads TRGGKVKDKN…QKGGRSVSTS (79 aa).

Its subcellular location is the vacuole membrane. This chain is FAS1 domain-containing protein YLR001C, found in Saccharomyces cerevisiae (strain ATCC 204508 / S288c) (Baker's yeast).